The primary structure comprises 347 residues: Merozoite surface protein 2 (347 aa).

The signal sequence occupies residues 1–20 (MKVIKTLSIINFFIFVTFNI). N-linked (GlcNAc...) asparagine glycosylation is found at N22 and N36. The polymorphic region stretch occupies residues 44 to 273 (AESKPPTGDG…EQTESPELQS (230 aa)). 22 tandem repeats follow at residues 53-60 (GAVASAGN), 61-68 (GAVASAGN), 69-76 (GAVASAGN), 77-84 (GAVASAGN), 85-88 (GAGN), 89-92 (GAGN), 93-96 (GAGN), 97-100 (GAGN), 101-104 (GAGN), 105-108 (GAGN), 109-112 (GAGN), 113-116 (GAGN), 117-120 (GAGN), 121-124 (GAGN), 125-128 (GAGN), 129-132 (GAGN), 133-136 (GAGN), 137-140 (GAGN), 141-144 (GAGN), 145-152 (GAVASAGN), 153-156 (GAGN), and 157-164 (GAVASAGN). The 6 X 8 AA repeats of G-A-V-A-S-A-G-N stretch occupies residues 53–164 (GAVASAGNGA…GNGAVASAGN (112 aa)). The tract at residues 85–156 (GAGNGAGNGA…VASAGNGAGN (72 aa)) is 16 X 4 AA repeats of G-A-G-N. Over residues 165-206 (GAVAERSSSTPATTTTTTTTNDAEASTSTSSENSNHNNAETN) the composition is skewed to low complexity. A disordered region spans residues 165 to 308 (GAVAERSSST…DSQKECTDGN (144 aa)). Composition is skewed to polar residues over residues 213 to 240 (VQPNQANKETQNNSNVQQDSQTKSNVPR) and 247 to 275 (KSPTAQPEQAENSAPTAEQTESPELQSAP). An N-linked (GlcNAc...) asparagine glycan is attached at N224. An N-linked (GlcNAc...) asparagine glycan is attached at N296. C304 and C312 form a disulfide bridge. N320 and N321 each carry an N-linked (GlcNAc...) asparagine glycan. N321 carries GPI-anchor amidated asparagine lipidation. The propeptide at 322–347 (SSNIASINKFVVLISATLVLSFAIFI) is removed in mature form.

It localises to the cell membrane. Its function is as follows. May play a role in the merozoite attachment to the erythrocyte. This chain is Merozoite surface protein 2, found in Plasmodium falciparum (isolate Nig32 / Nigeria).